A 360-amino-acid polypeptide reads, in one-letter code: Glutamate 5-kinase (360 aa).

Lys-7 contributes to the ATP binding site. Substrate is bound by residues Ser-47, Asp-134, and Asn-146. ATP-binding positions include 166 to 167 (TD) and 208 to 214 (TGGIKTK). The PUA domain occupies 273 to 344 (VGEIHLDDGA…IGINSRSETT (72 aa)).

The protein belongs to the glutamate 5-kinase family.

The protein resides in the cytoplasm. The catalysed reaction is L-glutamate + ATP = L-glutamyl 5-phosphate + ADP. Its pathway is amino-acid biosynthesis; L-proline biosynthesis; L-glutamate 5-semialdehyde from L-glutamate: step 1/2. Functionally, catalyzes the transfer of a phosphate group to glutamate to form L-glutamate 5-phosphate. In Prochlorococcus marinus (strain NATL2A), this protein is Glutamate 5-kinase.